Reading from the N-terminus, the 368-residue chain is Phosphate acyltransferase (368 aa).

Positions 337–368 (LGEGEHNAGGAGHASPAAGHHAEPSAAQSSKA) are disordered. Residues 349 to 368 (HASPAAGHHAEPSAAQSSKA) are compositionally biased toward low complexity.

The protein belongs to the PlsX family. In terms of assembly, homodimer. Probably interacts with PlsY.

The protein resides in the cytoplasm. The enzyme catalyses a fatty acyl-[ACP] + phosphate = an acyl phosphate + holo-[ACP]. Its pathway is lipid metabolism; phospholipid metabolism. Catalyzes the reversible formation of acyl-phosphate (acyl-PO(4)) from acyl-[acyl-carrier-protein] (acyl-ACP). This enzyme utilizes acyl-ACP as fatty acyl donor, but not acyl-CoA. This chain is Phosphate acyltransferase, found in Burkholderia lata (strain ATCC 17760 / DSM 23089 / LMG 22485 / NCIMB 9086 / R18194 / 383).